A 488-amino-acid polypeptide reads, in one-letter code: Tripartite motif-containing protein 6 (488 aa).

Residues 15–60 (CPICLELLTEPLSIDCGHSFCQVCIIGNSNNSVFGQGGRSSCPVCR) form an RING-type zinc finger. The B box-type zinc finger occupies 92–133 (LEVIFCALHGEKLQLFCKEDGKLICWLCERSQEHRGHHTFLM). Residues cysteine 97, histidine 100, cysteine 119, and histidine 125 each contribute to the Zn(2+) site. Residues 132–223 (LMEEVAQEYQ…SIIEKAEGDL (92 aa)) are a coiled coil. The B30.2/SPRY domain occupies 282–488 (DLRKMLKVFR…VPMTLRRPTS (207 aa)).

Belongs to the TRIM/RBCC family. Homotrimer. Forms heteromultimers (via B30.2/SPRY domain) with TRIM5. Interacts with MYC. Interacts (via SPRY domain) with IKBKE. Interacts with VAMP8; this interaction contributes to the activation of the type I interferon antiviral response. Interacts with DHX16.

It is found in the cytoplasm. The catalysed reaction is S-ubiquitinyl-[E2 ubiquitin-conjugating enzyme]-L-cysteine + [acceptor protein]-L-lysine = [E2 ubiquitin-conjugating enzyme]-L-cysteine + N(6)-ubiquitinyl-[acceptor protein]-L-lysine.. Its pathway is protein modification; protein ubiquitination. In terms of biological role, E3 ubiquitin ligase that plays a crucial role in the activation of the IKBKE-dependent branch of the type I interferon signaling pathway. In concert with the ubiquitin-conjugating E2 enzyme UBE2K, synthesizes unanchored 'Lys-48'-linked polyubiquitin chains that promote the oligomerization and autophosphorylation of IKBKE leading to stimulation of an antiviral response. Also ubiquitinates MYC and inhibits its transcription activation activity, maintaining the pluripotency of embryonic stem cells. Promotes the association of unanchored 'Lys-48'-polyubiquitin chains with DHX16 leading to enhancement of RIGI-mediated innate antiviral immune response. This is Tripartite motif-containing protein 6 (Trim6) from Mus musculus (Mouse).